A 380-amino-acid polypeptide reads, in one-letter code: cAMP-dependent protein kinase type I-alpha regulatory subunit (380 aa).

N-acetylmethionine is present on Met-1. Ala-2 is modified (N-acetylalanine; in cAMP-dependent protein kinase type I-alpha regulatory subunit, N-terminally processed). The tract at residues 2-135 (ASGSTASEEE…ALAKAIEKNV (134 aa)) is dimerization and phosphorylation. Residues Ser-3, Ser-76, and Ser-82 each carry the phosphoserine modification. Residues 64 to 96 (IQNLQKASARADSREDEISPPPPNPVVKGRRRR) form a disordered region. A Pseudophosphorylation motif motif is present at residues 95–99 (RRGAI). Position 100 is a phosphoserine (Ser-100). 3',5'-cyclic AMP-binding positions include 136 to 253 (LFSH…SKVS), Glu-201, Arg-210, 254 to 380 (ILES…SLSV), Glu-325, and Arg-334. Ser-257 carries the phosphoserine modification.

This sequence belongs to the cAMP-dependent kinase regulatory chain family. In terms of assembly, the inactive holoenzyme is composed of two regulatory chains and two catalytic chains. Activation by cAMP releases the two active catalytic monomers and the regulatory dimer. Interacts with PRKACA and PRKACB. PRKAR1A also interacts with RFC2; the complex may be involved in cell survival. Interacts with AKAP4. Interacts with RARA; the interaction occurs in the presence of cAMP or FSH and regulates RARA transcriptional activity. Interacts with the phosphorylated form of PJA2. Interacts with CBFA2T3. Interacts with PRKX; regulates this cAMP-dependent protein kinase. Interacts with smAKAP; this interaction may target PRKAR1A to the plasma membrane. Interacts with AICDA. Post-translationally, the pseudophosphorylation site binds to the substrate-binding region of the catalytic chain, resulting in the inhibition of its activity. In terms of tissue distribution, four types of regulatory chains are found: I-alpha, I-beta, II-alpha, and II-beta. Their expression varies among tissues and is in some cases constitutive and in others inducible.

The protein resides in the cell membrane. Functionally, regulatory subunit of the cAMP-dependent protein kinases involved in cAMP signaling in cells. The protein is cAMP-dependent protein kinase type I-alpha regulatory subunit (PRKAR1A) of Sus scrofa (Pig).